We begin with the raw amino-acid sequence, 518 residues long: Protein nucleotidyltransferase YdiU (518 aa).

The segment covering 1-10 has biased composition (basic and acidic residues); sequence MTHLHFDNRL. Residues 1-25 are disordered; the sequence is MTHLHFDNRLRQQLPGDPEEGARRR. ATP contacts are provided by glycine 100, glycine 102, arginine 103, lysine 123, aspartate 135, glycine 136, arginine 193, and arginine 200. The active-site Proton acceptor is aspartate 270. Positions 271 and 280 each coordinate Mg(2+). Aspartate 280 contacts ATP.

Belongs to the SELO family. Requires Mg(2+) as cofactor. Mn(2+) serves as cofactor.

It carries out the reaction L-seryl-[protein] + ATP = 3-O-(5'-adenylyl)-L-seryl-[protein] + diphosphate. The catalysed reaction is L-threonyl-[protein] + ATP = 3-O-(5'-adenylyl)-L-threonyl-[protein] + diphosphate. It catalyses the reaction L-tyrosyl-[protein] + ATP = O-(5'-adenylyl)-L-tyrosyl-[protein] + diphosphate. The enzyme catalyses L-histidyl-[protein] + UTP = N(tele)-(5'-uridylyl)-L-histidyl-[protein] + diphosphate. It carries out the reaction L-seryl-[protein] + UTP = O-(5'-uridylyl)-L-seryl-[protein] + diphosphate. The catalysed reaction is L-tyrosyl-[protein] + UTP = O-(5'-uridylyl)-L-tyrosyl-[protein] + diphosphate. Functionally, nucleotidyltransferase involved in the post-translational modification of proteins. It can catalyze the addition of adenosine monophosphate (AMP) or uridine monophosphate (UMP) to a protein, resulting in modifications known as AMPylation and UMPylation. The protein is Protein nucleotidyltransferase YdiU of Xanthomonas euvesicatoria pv. vesicatoria (strain 85-10) (Xanthomonas campestris pv. vesicatoria).